We begin with the raw amino-acid sequence, 615 residues long: Dolichyl-diphosphooligosaccharide--protein glycosyltransferase subunit 1A (615 aa).

Residues methionine 1–alanine 28 form the signal peptide. Residues aspartate 29–glutamate 437 lie on the Lumenal side of the membrane. Position 187 is an N6-acetyllysine (lysine 187). Asparagine 300, asparagine 353, and asparagine 431 each carry an N-linked (GlcNAc...) asparagine glycan. A helical transmembrane segment spans residues proline 438–tyrosine 455. Residues methionine 456–isoleucine 615 lie on the Cytoplasmic side of the membrane.

This sequence belongs to the OST1 family. In terms of assembly, component of the oligosaccharyltransferase (OST) complex.

It is found in the endoplasmic reticulum membrane. The protein operates within protein modification; protein glycosylation. Subunit of the oligosaccharyl transferase (OST) complex that catalyzes the initial transfer of a defined glycan (Glc(3)Man(9)GlcNAc(2) in eukaryotes) from the lipid carrier dolichol-pyrophosphate to an asparagine residue within an Asn-X-Ser/Thr consensus motif in nascent polypeptide chains, the first step in protein N-glycosylation. N-glycosylation occurs cotranslationally and the complex associates with the Sec61 complex at the channel-forming translocon complex that mediates protein translocation across the endoplasmic reticulum (ER). All subunits are required for a maximal enzyme activity. In Oryza sativa subsp. japonica (Rice), this protein is Dolichyl-diphosphooligosaccharide--protein glycosyltransferase subunit 1A (OST1A).